Reading from the N-terminus, the 143-residue chain is Small ribosomal subunit protein bS6 (143 aa).

Positions 97 to 143 (DTEQSLIMKSKDEKGDKHERSERRRRDDEEGDVPAATDTDGDNAEAA) are disordered. A compositionally biased stretch (basic and acidic residues) spans 105-124 (KSKDEKGDKHERSERRRRDD).

It belongs to the bacterial ribosomal protein bS6 family.

Its function is as follows. Binds together with bS18 to 16S ribosomal RNA. The protein is Small ribosomal subunit protein bS6 of Xanthomonas oryzae pv. oryzae (strain MAFF 311018).